The primary structure comprises 309 residues: GDP-6-deoxy-D-mannose reductase (309 aa).

Residues 11-12, Arg32, 47-48, and 71-73 contribute to the NADP(+) site; these read FV, DI, and AKS. Residue 114–115 participates in substrate binding; it reads SS. Residue Tyr140 coordinates NADP(+). Residues Asn169, Asp183, Arg209, and 269–272 each bind substrate; that span reads RPSE.

Belongs to the NAD(P)-dependent epimerase/dehydratase family. GDP-6-deoxy-D-mannose reductase subfamily.

It catalyses the reaction GDP-alpha-D-rhamnose + NAD(+) = GDP-4-dehydro-alpha-D-rhamnose + NADH + H(+). It carries out the reaction GDP-alpha-D-rhamnose + NADP(+) = GDP-4-dehydro-alpha-D-rhamnose + NADPH + H(+). Its function is as follows. Reductase that catalyzes the conversion of GDP-6-deoxy-D-mannose to GDP-4-dehydro-6-deoxy-D-mannose (GDP-D-rhamnose). This Aneurinibacillus thermoaerophilus protein is GDP-6-deoxy-D-mannose reductase (rmd).